A 192-amino-acid polypeptide reads, in one-letter code: MTEYLLLLISTVLVNNFVLVKFLGLCPFMGVSSKLESAIGMSMATTFVLTLASILSYLVNQYLLLPFDLSYLRTMSFILVIAVVVQFTEMVVQKTSAALHRALGIYLPLITTNCAVLGVALLNVNEKHDFIQSAIYGFGAAVGFSLVLILFSAMRERLAAADVPLPFKGGAIAMITAGLMSLAFMGFTGLVK.

The next 6 helical transmembrane spans lie at 5-25 (LLLL…FLGL), 39-59 (IGMS…SYLV), 65-85 (LPFD…AVVV), 102-122 (ALGI…VALL), 134-154 (AIYG…FSAM), and 171-191 (AIAM…TGLV).

The protein belongs to the NqrDE/RnfAE family. As to quaternary structure, the complex is composed of six subunits: RnfA, RnfB, RnfC, RnfD, RnfE and RnfG.

The protein localises to the cell inner membrane. Functionally, part of a membrane-bound complex that couples electron transfer with translocation of ions across the membrane. The chain is Ion-translocating oxidoreductase complex subunit A from Shewanella putrefaciens (strain CN-32 / ATCC BAA-453).